The chain runs to 428 residues: MLLLAGLLRRARPPRRPSVRRLSGLLDRYGFVPPASLTPHSASDDGGAKKRRPKKPPYRPPSSLDRGGRPAARSDLPFDFRFSYTESSPGDKPIGLREPKYSPFGPGRLDRPWTGLCAPAVDTTLRDAHADDPAPAAERELEEARRRERERVLGEPLTPAERAFLVSKCQKSRTKKQINLGRDGLTHNMLNDIHNHWKNDEAVRVKCLGVPTVDMQNVCHQLEDKTGGLIIHRHGGQLILYRGRHYNPKKRPVIPLMLWKPAEPVYPRLIKTTIEGLTVEETKEMRKKGLYVPVLTKLAKNGYYASLVPMVRDAFLTDELVRIDSKGLPKSDYRKIGVKLRDLVPCIIVSFDKEQIIVWRGKDYNGTIQDNTQKTSVSVLEEESAGAESENGDQEQASSDWASDECSQLSSSDEMPDDKSAISEADSD.

The transit peptide at 1 to 21 directs the protein to the mitochondrion; the sequence is MLLLAGLLRRARPPRRPSVRR. Disordered regions lie at residues 33-100 and 129-152; these read PPAS…REPK and HADD…RERV. CRM domains are found at residues 155 to 253 and 275 to 371; these read EPLT…KRPV and EGLT…IQDN. Residues 378–428 form a disordered region; that stretch reads SVLEEESAGAESENGDQEQASSDWASDECSQLSSSDEMPDDKSAISEADSD. The segment covering 380–393 has biased composition (acidic residues); the sequence is LEEESAGAESENGD. Residues 394–413 show a composition bias toward polar residues; the sequence is QEQASSDWASDECSQLSSSD.

Part of large ribonucleo-protein complexes that include group IIB introns.

It is found in the mitochondrion. Its function is as follows. May be involved in the splicing of group IIB introns in mitochondria. This chain is CRS2-associated factor 1, mitochondrial, found in Oryza sativa subsp. japonica (Rice).